We begin with the raw amino-acid sequence, 91 residues long: Probable Fe(2+)-trafficking protein (91 aa).

It belongs to the Fe(2+)-trafficking protein family.

Functionally, could be a mediator in iron transactions between iron acquisition and iron-requiring processes, such as synthesis and/or repair of Fe-S clusters in biosynthetic enzymes. This Burkholderia mallei (strain NCTC 10247) protein is Probable Fe(2+)-trafficking protein.